The following is a 651-amino-acid chain: Peptide-N(4)-(N-acetyl-beta-glucosaminyl)asparagine amidase (651 aa).

Position 2 is an N-acetylalanine (Ala-2). Residues 30–91 (EASKLLLTYA…EGETHLIFPK (62 aa)) enclose the PUB domain. Residues Cys-247, Cys-250, Cys-280, and Cys-283 each contribute to the Zn(2+) site. The active-site Nucleophile is Cys-306. Catalysis depends on residues His-333 and Asp-350. Residues 451 to 651 (ELGGRVSGSL…LEIIITFNDL (201 aa)) form the PAW domain.

Belongs to the transglutaminase-like superfamily. PNGase family. Component of a complex required to couple retrotranslocation, ubiquitination and deglycosylation composed of NGLY1, SAKS1, AMFR, VCP and RAD23B. Interacts with the proteasome components RAD23B and PSMC1. Interacts with directly with VCP. Interacts with DERL1, bringing it close to the endoplasmic reticulum membrane. Interacts with SAKS1. The cofactor is Zn(2+). Ubiquitously expressed with highest level in testis.

It localises to the cytoplasm. The enzyme catalyses Hydrolysis of an N(4)-(acetyl-beta-D-glucosaminyl)asparagine residue in which the glucosamine residue may be further glycosylated, to yield a (substituted) N-acetyl-beta-D-glucosaminylamine and a peptide containing an aspartate residue.. With respect to regulation, inhibited by Z-VAD-fmk, a well-known caspase inhibitor, which inhibits enzyme activity through covalent binding of the carbohydrate to the single Cys-306 residue. Its function is as follows. Specifically deglycosylates the denatured form of N-linked glycoproteins in the cytoplasm and assists their proteasome-mediated degradation. Cleaves the beta-aspartyl-glucosamine (GlcNAc) of the glycan and the amide side chain of Asn, converting Asn to Asp. Prefers proteins containing high-mannose over those bearing complex type oligosaccharides. Can recognize misfolded proteins in the endoplasmic reticulum that are exported to the cytosol to be destroyed and deglycosylate them, while it has no activity toward native proteins. Deglycosylation is a prerequisite for subsequent proteasome-mediated degradation of some, but not all, misfolded glycoproteins. This is Peptide-N(4)-(N-acetyl-beta-glucosaminyl)asparagine amidase (Ngly1) from Mus musculus (Mouse).